Here is a 276-residue protein sequence, read N- to C-terminus: MEGASRHGLAAARATLDEATATAPGAPRPVDAGRIAEDLRAVAELLAREPAVRRALTDPGAPVAARTELVTRLFGTQLAPASLRIVHTAVGARWSRPFDLQYALLELSVEALLVEAERDGALEEVEDELFRFGRILDQNAPLALALTDPAAPAAVKDRLLTRLLAGRAHPVTVRLVQQAAADRIHGDVERRLAEFSRIAAARRGRVVAIVRTAVPLSSEVVARLGAAISRYFGRQIQLQVDLDPDILGGVVVQVGGEVVDGSVLRRFVAARRALLR.

It belongs to the ATPase delta chain family. In terms of assembly, F-type ATPases have 2 components, F(1) - the catalytic core - and F(0) - the membrane proton channel. F(1) has five subunits: alpha(3), beta(3), gamma(1), delta(1), epsilon(1). F(0) has three main subunits: a(1), b(2) and c(10-14). The alpha and beta chains form an alternating ring which encloses part of the gamma chain. F(1) is attached to F(0) by a central stalk formed by the gamma and epsilon chains, while a peripheral stalk is formed by the delta and b chains.

It localises to the cell membrane. In terms of biological role, f(1)F(0) ATP synthase produces ATP from ADP in the presence of a proton or sodium gradient. F-type ATPases consist of two structural domains, F(1) containing the extramembraneous catalytic core and F(0) containing the membrane proton channel, linked together by a central stalk and a peripheral stalk. During catalysis, ATP synthesis in the catalytic domain of F(1) is coupled via a rotary mechanism of the central stalk subunits to proton translocation. Its function is as follows. This protein is part of the stalk that links CF(0) to CF(1). It either transmits conformational changes from CF(0) to CF(1) or is implicated in proton conduction. The protein is ATP synthase subunit delta of Frankia casuarinae (strain DSM 45818 / CECT 9043 / HFP020203 / CcI3).